Here is a 149-residue protein sequence, read N- to C-terminus: MPRSPAKTSPRKGSPRKGSPRKGSPSRKASPKRGGKGAKRAGKGGRRRRVVKRRRRRRESYGIYIYKVLKQVHPDTGISSRAMSVMNSFVNDVFERIASEASRLTSANRRSTVSSREIQTAVRLLLPGELAKHAVSEGTKAVTKYTTSR.

The tract at residues 1–57 is disordered; the sequence is MPRSPAKTSPRKGSPRKGSPRKGSPSRKASPKRGGKGAKRAGKGGRRRRVVKRRRRR. 6 consecutive short sequence motifs (SPKK motif) follow at residues 4–7, 9–12, 14–17, 19–22, 24–27, and 30–33; these read SPAK, SPRK, SPSR, and SPKR. The span at 9 to 20 shows a compositional bias: basic residues; the sequence is SPRKGSPRKGSP. Phosphoserine is present on residues serine 19, serine 24, and serine 30. The span at 29–57 shows a compositional bias: basic residues; the sequence is ASPKRGGKGAKRAGKGGRRRRVVKRRRRR. Serine 136 is a glycosylation site (O-linked (GlcNAc) serine). Lysine 144 participates in a covalent cross-link: Glycyl lysine isopeptide (Lys-Gly) (interchain with G-Cter in ubiquitin).

This sequence belongs to the histone H2B family. As to quaternary structure, the nucleosome is a histone octamer containing two molecules each of H2A, H2B, H3 and H4 assembled in one H3-H4 heterotetramer and two H2A-H2B heterodimers. The octamer wraps approximately 147 bp of DNA. Monoubiquitination of Lys-144 gives a specific tag for epigenetic transcriptional activation and is also prerequisite for histone H3 'Lys-4' and 'Lys-79' methylation. Post-translationally, phosphorylated on SPKK motifs 4, 5 and 6; which may regulate DNA binding. Dephosphorylated during maturation of spermatids to mature sperm and rephosphorylated at fertilization. In terms of processing, glcNAcylation at Ser-136 promotes monoubiquitination of Lys-144. It fluctuates in response to extracellular glucose, and associates with transcribed genes.

It is found in the nucleus. The protein resides in the chromosome. Core component of nucleosome. Nucleosomes wrap and compact DNA into chromatin, limiting DNA accessibility to the cellular machineries which require DNA as a template. Histones thereby play a central role in transcription regulation, DNA repair, DNA replication and chromosomal stability. DNA accessibility is regulated via a complex set of post-translational modifications of histones, also called histone code, and nucleosome remodeling. This Parechinus angulosus (Angulate sea urchin) protein is Histone H2B.3, sperm.